The chain runs to 188 residues: Peptidyl-tRNA hydrolase (188 aa).

TRNA is bound at residue Y14. The active-site Proton acceptor is H19. Positions 64, 66, and 113 each coordinate tRNA.

Belongs to the PTH family. In terms of assembly, monomer.

It is found in the cytoplasm. The catalysed reaction is an N-acyl-L-alpha-aminoacyl-tRNA + H2O = an N-acyl-L-amino acid + a tRNA + H(+). Its function is as follows. Hydrolyzes ribosome-free peptidyl-tRNAs (with 1 or more amino acids incorporated), which drop off the ribosome during protein synthesis, or as a result of ribosome stalling. Catalyzes the release of premature peptidyl moieties from peptidyl-tRNA molecules trapped in stalled 50S ribosomal subunits, and thus maintains levels of free tRNAs and 50S ribosomes. The sequence is that of Peptidyl-tRNA hydrolase from Chloroflexus aggregans (strain MD-66 / DSM 9485).